Consider the following 262-residue polypeptide: Virulence plasmid protein pGP6-D-related protein (262 aa).

This sequence belongs to the UPF0137 (pGP6-D) family.

The protein is Virulence plasmid protein pGP6-D-related protein of Chlamydia muridarum (strain MoPn / Nigg).